The primary structure comprises 2157 residues: Polyketide synthase 2 (2157 aa).

Positions 7-244 (FIFGDQTGGF…IPIPIWAPYH (238 aa)) are N-terminal acylcarrier protein transacylase domain (SAT). The region spanning 374-807 (DSKIAIIGMS…GGNSALLLED (434 aa)) is the Ketosynthase family 3 (KS3) domain. Active-site for beta-ketoacyl synthase activity residues include C546, H681, and H723. The interval 908–1213 (GFVFSGQGAQ…ASLHRKDDGW (306 aa)) is malonyl-CoA:ACP transacylase (MAT) domain. Residue S998 is the For acyl/malonyl transferase activity of the active site. The tract at residues 1290-1605 (TSSVQKIIRQ…RSLLNKVLPP (316 aa)) is product template (PT) domain. An N-terminal hotdog fold region spans residues 1294–1428 (QKIIRQTDGP…CLLRFADPTS (135 aa)). The PKS/mFAS DH domain maps to 1294–1600 (QKIIRQTDGP…FLGMSRSLLN (307 aa)). H1327 functions as the Proton acceptor; for dehydratase activity in the catalytic mechanism. The C-terminal hotdog fold stretch occupies residues 1455–1600 (TDSLLSRGIV…FLGMSRSLLN (146 aa)). D1514 serves as the catalytic Proton donor; for dehydratase activity. Positions 1626-1652 (AASAKDTERRPLDIPTRAQRQPSSAQT) are disordered. The span at 1643-1652 (AQRQPSSAQT) shows a compositional bias: polar residues. Residues 1649–1726 (SAQTGTMGRI…ELKAFLGADQ (78 aa)) enclose the Carrier 1 domain. Residue S1686 is modified to O-(pantetheine 4'-phosphoryl)serine. The tract at residues 1733 to 1762 (ACESSNGQHTPQTSDKGSGTLAVQKTDDDT) is disordered. Over residues 1735 to 1755 (ESSNGQHTPQTSDKGSGTLAV) the composition is skewed to polar residues. In terms of domain architecture, Carrier 2 spans 1765 to 1839 (DMTLNRVCAI…SLQKALCGSE (75 aa)). S1799 is modified (O-(pantetheine 4'-phosphoryl)serine). The segment at 1840 to 1859 (AASNGAPEANETTPSSHRLE) is disordered. The segment at 1875-2151 (ASPPHATSIL…MIEMGNLIGE (277 aa)) is thioesterase (TE) domain. S1981 serves as the catalytic For thioesterase activity.

Functionally, polyketide synthase; part of the Pks2 gene cluster that mediates the formation of infectious structures (appressoria), enabling these fungi to kill insects faster. The product of the Pks2 gene cluster is different from the one of Pks1 and has still not been identified. This Metarhizium robertsii (strain ARSEF 23 / ATCC MYA-3075) (Metarhizium anisopliae (strain ARSEF 23)) protein is Polyketide synthase 2.